A 505-amino-acid chain; its full sequence is Maturase K (505 aa).

Belongs to the intron maturase 2 family. MatK subfamily.

The protein resides in the plastid. It is found in the chloroplast. Functionally, usually encoded in the trnK tRNA gene intron. Probably assists in splicing its own and other chloroplast group II introns. This is Maturase K from Sciadopitys verticillata (Japanese umbrella-pine).